A 1455-amino-acid polypeptide reads, in one-letter code: DNA polymerase II large subunit (1455 aa).

Positions 1409–1440 (GLLENLSNGSKKTEKAEKAEKPRKKSDEKPKK) are disordered. Residues 1419 to 1438 (KKTEKAEKAEKPRKKSDEKP) show a composition bias toward basic and acidic residues.

This sequence belongs to the archaeal DNA polymerase II family. As to quaternary structure, heterodimer of a large subunit and a small subunit. Post-translationally, this protein undergoes a protein self splicing that involves a post-translational excision of the intervening region (intein) followed by peptide ligation.

It carries out the reaction DNA(n) + a 2'-deoxyribonucleoside 5'-triphosphate = DNA(n+1) + diphosphate. The catalysed reaction is Exonucleolytic cleavage in the 3'- to 5'-direction to yield nucleoside 5'-phosphates.. Its function is as follows. Possesses two activities: a DNA synthesis (polymerase) and an exonucleolytic activity that degrades single-stranded DNA in the 3'- to 5'-direction. Has a template-primer preference which is characteristic of a replicative DNA polymerase. The sequence is that of DNA polymerase II large subunit (polC) from Pyrococcus abyssi (strain GE5 / Orsay).